The following is a 455-amino-acid chain: MSPVSPRSLTLIGAGLAGCLLAILLSRRGWQITVYERRGDPRIKGYECGRSINLALAERGRHALRQAGAEELVMAKAVMMRGRMVHPLVGEPQLQRYGRDDSEVIWSIHRAALNVALLDLAEQAGARVHFYRRLHTVDFDAGYARFIDDRDDQPHEIHFQSLIGSDGAGSALRAAMQRKSPLGERTEFLDHSYKELEIPPLPGGGFRIEGNALHIWPRGRYMFIALPNDGGTFTVTLFLPNAGEPSFATTRNGDEAFALFARDFPDALPLIPQLKQHWEEHPPGLLGTLTLDRWHLDGRALLIGDAAHAMVPFHGQGMNCAFEDCVALADQLDAHDDLASAFAAFEAARRDDAGAIQQMALENYLEMRDRVDDPEFLLQRQLEQQLQARWPTRFVPHYTMVTFLRTRYSIALARSEIQREILVEATRGHSDLSRLDWAALETIVHARLEPLDGAH.

Belongs to the aromatic-ring hydroxylase family. KMO subfamily. The cofactor is FAD.

It carries out the reaction L-kynurenine + NADPH + O2 + H(+) = 3-hydroxy-L-kynurenine + NADP(+) + H2O. It functions in the pathway cofactor biosynthesis; NAD(+) biosynthesis; quinolinate from L-kynurenine: step 1/3. In terms of biological role, catalyzes the hydroxylation of L-kynurenine (L-Kyn) to form 3-hydroxy-L-kynurenine (L-3OHKyn). Required for synthesis of quinolinic acid. The sequence is that of Kynurenine 3-monooxygenase from Xanthomonas oryzae pv. oryzae (strain MAFF 311018).